Here is a 133-residue protein sequence, read N- to C-terminus: Aspartate 1-decarboxylase (133 aa).

Serine 26 (schiff-base intermediate with substrate; via pyruvic acid) is an active-site residue. Serine 26 is modified (pyruvic acid (Ser)). Threonine 58 contributes to the substrate binding site. The active-site Proton donor is the tyrosine 59. 74–76 provides a ligand contact to substrate; it reads GAA.

This sequence belongs to the PanD family. Heterooctamer of four alpha and four beta subunits. The cofactor is pyruvate. In terms of processing, is synthesized initially as an inactive proenzyme, which is activated by self-cleavage at a specific serine bond to produce a beta-subunit with a hydroxyl group at its C-terminus and an alpha-subunit with a pyruvoyl group at its N-terminus.

It localises to the cytoplasm. The catalysed reaction is L-aspartate + H(+) = beta-alanine + CO2. Its pathway is cofactor biosynthesis; (R)-pantothenate biosynthesis; beta-alanine from L-aspartate: step 1/1. Catalyzes the pyruvoyl-dependent decarboxylation of aspartate to produce beta-alanine. In Legionella pneumophila (strain Paris), this protein is Aspartate 1-decarboxylase.